A 390-amino-acid chain; its full sequence is MSKQQHPSSKTQITRRRDTADMTFEQVLHKGSSANMGGLSSMLGKDREASKTAVDQYFRHWDGKTAKTETTKVREERKADYATLTRQYYNLVTDFYEYGWGQSFHFCTFAPGETFASAITRYEHTLAHRIGIKKGMKVLDIGCGVGGPARQIAKFTGANITGITINEYQVERARRYAEMEGYGAGEQLKFVQGDFMALPFEKETFDAVYSIEATVHAPKLEDVYKQIFNVLKPGGIFGLYEWVMTDAYDENDPHHKEIRFGIEHGGGIANLQTAQTAIAAIKAAGFELLESEDLADNSDRAPWYWPLGGNAWQYASTFGDILSTFTMTPAGRAIAHTVLGVVESIGLVPPGTKKTADSLSTTAAALVAGGKEGLFTPMFLMVARKPVAKE.

The segment covering 1–12 has biased composition (polar residues); the sequence is MSKQQHPSSKTQ. Residues 1-21 form a disordered region; the sequence is MSKQQHPSSKTQITRRRDTAD.

It belongs to the class I-like SAM-binding methyltransferase superfamily. Erg6/SMT family.

The catalysed reaction is zymosterol + S-adenosyl-L-methionine = fecosterol + S-adenosyl-L-homocysteine + H(+). Its pathway is steroid metabolism; ergosterol biosynthesis; ergosterol from zymosterol: step 1/5. Functionally, catalyzes the methyl transfer from S-adenosyl-methionine to the C-24 of zymosterol to form fecosterol. This Pyricularia oryzae (strain 70-15 / ATCC MYA-4617 / FGSC 8958) (Rice blast fungus) protein is Sterol 24-C-methyltransferase (ERG6).